A 222-amino-acid polypeptide reads, in one-letter code: uncharacterized protein (222 aa).

A run of 4 helical transmembrane segments spans residues 25–45 (LLWL…PATA), 80–100 (LLGA…ALIY), 111–131 (FAIM…FPLL), and 160–180 (LALT…VPFF).

Its subcellular location is the cell membrane. This is an uncharacterized protein from Bacillus subtilis (strain 168).